Consider the following 951-residue polypeptide: Protein translocase subunit SecA (951 aa).

Residues Q90, 108-112 (GEGKT), and D509 contribute to the ATP site.

It belongs to the SecA family. Monomer and homodimer. Part of the essential Sec protein translocation apparatus which comprises SecA, SecYEG and auxiliary proteins SecDF. Other proteins may also be involved.

It is found in the cell inner membrane. Its subcellular location is the cellular thylakoid membrane. It localises to the cytoplasm. The enzyme catalyses ATP + H2O + cellular proteinSide 1 = ADP + phosphate + cellular proteinSide 2.. Its function is as follows. Part of the Sec protein translocase complex. Interacts with the SecYEG preprotein conducting channel. Has a central role in coupling the hydrolysis of ATP to the transfer of proteins into and across the cell membrane, serving as an ATP-driven molecular motor driving the stepwise translocation of polypeptide chains across the membrane. Functionally, probably participates in protein translocation into and across both the cytoplasmic and thylakoid membranes in cyanobacterial cells. The sequence is that of Protein translocase subunit SecA from Prochlorococcus marinus (strain MIT 9303).